The primary structure comprises 271 residues: 3-methyl-2-oxobutanoate hydroxymethyltransferase (271 aa).

Residues aspartate 49 and aspartate 88 each coordinate Mg(2+). 3-methyl-2-oxobutanoate contacts are provided by residues 49-50 (DS), aspartate 88, and lysine 118. Glutamate 120 contributes to the Mg(2+) binding site. Residue glutamate 187 is the Proton acceptor of the active site.

Belongs to the PanB family. As to quaternary structure, homodecamer; pentamer of dimers. The cofactor is Mg(2+).

The protein resides in the cytoplasm. The enzyme catalyses 3-methyl-2-oxobutanoate + (6R)-5,10-methylene-5,6,7,8-tetrahydrofolate + H2O = 2-dehydropantoate + (6S)-5,6,7,8-tetrahydrofolate. The protein operates within cofactor biosynthesis; (R)-pantothenate biosynthesis; (R)-pantoate from 3-methyl-2-oxobutanoate: step 1/2. In terms of biological role, catalyzes the reversible reaction in which hydroxymethyl group from 5,10-methylenetetrahydrofolate is transferred onto alpha-ketoisovalerate to form ketopantoate. This Bartonella bacilliformis (strain ATCC 35685 / KC583 / Herrer 020/F12,63) protein is 3-methyl-2-oxobutanoate hydroxymethyltransferase.